Here is an 896-residue protein sequence, read N- to C-terminus: Translation initiation factor IF-2 (896 aa).

Residues 1-260 form a disordered region; it reads MDIENTNKPD…AQTNKKAHKA (260 aa). Positions 19-34 are enriched in basic and acidic residues; the sequence is KAADSKPESGKTDSKR. Low complexity predominate over residues 56-66; that stretch reads EESSGGKASGK. A compositionally biased stretch (basic and acidic residues) spans 85-136; it reads SVKEKKPDERLEETKKTAPRFEDKKSDAPSAQNEKRSFDSAKKEEKQTERKK. Positions 168–177 are enriched in low complexity; it reads RGQGNRPQRP. Residues 375-544 form the tr-type G domain; that stretch reads PRPPVVTIMG…LLQAEVLELK (170 aa). The interval 384–391 is G1; it reads GHVDHGKT. 384-391 lines the GTP pocket; the sequence is GHVDHGKT. Residues 409–413 form a G2 region; sequence GITQH. Residues 430–433 are G3; sequence DTPG. Residues 430-434 and 484-487 each bind GTP; these read DTPGH and NKVD. Residues 484–487 are G4; that stretch reads NKVD. A G5 region spans residues 520 to 522; it reads SAL. Residues 877-896 are disordered; that stretch reads SDSEKYKAPEIKEEGTETDE.

This sequence belongs to the TRAFAC class translation factor GTPase superfamily. Classic translation factor GTPase family. IF-2 subfamily.

The protein localises to the cytoplasm. Functionally, one of the essential components for the initiation of protein synthesis. Protects formylmethionyl-tRNA from spontaneous hydrolysis and promotes its binding to the 30S ribosomal subunits. Also involved in the hydrolysis of GTP during the formation of the 70S ribosomal complex. The polypeptide is Translation initiation factor IF-2 (Treponema denticola (strain ATCC 35405 / DSM 14222 / CIP 103919 / JCM 8153 / KCTC 15104)).